Consider the following 153-residue polypeptide: MADTLMSDTPFWQRKTLDEMTDAEWESLCDGCGQCCLHKLMDEDTDEIYFTNVACRQLKIKTCQCRHYERRFEFEPDCIKLTRENLPDFEWLPMTCAYRLLAEGKPLPTWHPLLTGSKAAMHGERISVRHIAVKESEVRDWQDHILNKPSWAE.

This sequence belongs to the UPF0260 family.

The sequence is that of UPF0260 protein YcgN from Salmonella paratyphi B (strain ATCC BAA-1250 / SPB7).